The following is a 128-amino-acid chain: Glycine cleavage system H protein (128 aa).

Residues L24–R106 enclose the Lipoyl-binding domain. K65 is modified (N6-lipoyllysine).

It belongs to the GcvH family. In terms of assembly, the glycine cleavage system is composed of four proteins: P, T, L and H. It depends on (R)-lipoate as a cofactor.

Its function is as follows. The glycine cleavage system catalyzes the degradation of glycine. The H protein shuttles the methylamine group of glycine from the P protein to the T protein. In Prochlorococcus marinus (strain NATL1A), this protein is Glycine cleavage system H protein.